We begin with the raw amino-acid sequence, 374 residues long: Type IV pilus assembly protein PilC (374 aa).

3 helical membrane passes run 138-158 (AMTY…ILLI), 187-207 (EFLQ…GFTF), and 347-367 (IMAV…LPIF).

This sequence belongs to the GSP F family. Homotetramer. Interacts with PilB.

The protein resides in the cell inner membrane. Its function is as follows. Essential inner membrane component of the type IV pilus (T4P) that plays a role in surface and host cell adhesion, colonization, biofilm maturation, virulence, and twitching, a form of surface-associated motility facilitated by cycles of extension, adhesion, and retraction of T4P fibers. Controls both pilus assembly and disassembly and plays an important role in PilB localization to the complex and ATPase activity. This chain is Type IV pilus assembly protein PilC (pilC), found in Pseudomonas aeruginosa (strain ATCC 15692 / DSM 22644 / CIP 104116 / JCM 14847 / LMG 12228 / 1C / PRS 101 / PAO1).